A 74-amino-acid chain; its full sequence is Delta-stichotoxin-Sgt2a (74 aa).

Positions 1–19 (MNRLIILVFAAVFLTLASA) are cleaved as a signal peptide. Positions 20 to 28 (EVSEDVNMA) are excised as a propeptide. 3 disulfide bridges follow: C34-C71, C36-C64, and C57-C72.

It belongs to the sea anemone sodium channel inhibitory toxin family. Type I subfamily.

It localises to the secreted. Its subcellular location is the nematocyst. Binds specifically to voltage-gated sodium channels (Nav), thereby delaying their inactivation during signal transduction. The chain is Delta-stichotoxin-Sgt2a from Stichodactyla gigantea (Giant carpet anemone).